Here is a 101-residue protein sequence, read N- to C-terminus: Cyanovirin-N (101 aa).

Cystine bridges form between Cys-8-Cys-22 and Cys-58-Cys-73.

The protein belongs to the cyanovirin-N family. In solution exists as a metastable domain-swapped homodimer which very slowly converts into a more stable monomeric form at room temperature. Under physiological conditions it is unlikely that the dimeric species exists and indeed the monomer is more active against HIV. Interacts with HIV-1 gp120. In terms of processing, cleavage, or reduction and alkylation of the disulfide bonds results in the loss of anti-HIV activity.

In terms of biological role, mannose-binding lectin. This Nostoc ellipsosporum protein is Cyanovirin-N.